The primary structure comprises 717 residues: DNA-binding protein RFX2 (717 aa).

Residues 1-28 form a disordered region; the sequence is MQNSEGGADSPASVALRPAAQPMPASPQ. At serine 26 the chain carries Phosphoserine. A DNA-binding region (RFX-type winged-helix) is located at residues 194 to 269; sequence HLQWLLDNYE…YHYYGIRLKP (76 aa). The disordered stretch occupies residues 286–318; that stretch reads RQQPTHQKPRYRPAQKSDSLGDGSAHSNMHGMP. At serine 411 the chain carries Phosphoserine. A compositionally biased stretch (basic and acidic residues) spans 685-710; the sequence is DGHSSEADVDGRSLGEPLVKRERSDP. The segment at 685–717 is disordered; the sequence is DGHSSEADVDGRSLGEPLVKRERSDPSHPLQGI.

Belongs to the RFX family. As to quaternary structure, homodimer; probably only forms homodimers in testis. Heterodimer; heterodimerizes with RFX1 and RFX3.

Its subcellular location is the nucleus. It localises to the cytoplasm. Its function is as follows. Transcription factor that acts as a key regulator of spermatogenesis. Acts by regulating expression of genes required for the haploid phase during spermiogenesis, such as genes required for cilium assembly and function. Recognizes and binds the X-box, a regulatory motif with DNA sequence 5'-GTNRCC(0-3N)RGYAAC-3' present on promoters. Probably activates transcription of the testis-specific histone gene H1-6. The chain is DNA-binding protein RFX2 (Rfx2) from Mus musculus (Mouse).